A 519-amino-acid polypeptide reads, in one-letter code: Maturase K (519 aa).

It belongs to the intron maturase 2 family. MatK subfamily.

Its subcellular location is the plastid. It is found in the chloroplast. In terms of biological role, usually encoded in the trnK tRNA gene intron. Probably assists in splicing its own and other chloroplast group II introns. This chain is Maturase K, found in Cycas panzhihuaensis (Dukou cycad).